Here is a 545-residue protein sequence, read N- to C-terminus: Chaperonin GroEL 4 (545 aa).

Residues 30–33 (TLGP), K51, 87–91 (DGTTT), G415, and D495 each bind ATP.

The protein belongs to the chaperonin (HSP60) family. As to quaternary structure, forms a cylinder of 14 subunits composed of two heptameric rings stacked back-to-back. Interacts with the co-chaperonin GroES.

The protein resides in the cytoplasm. The enzyme catalyses ATP + H2O + a folded polypeptide = ADP + phosphate + an unfolded polypeptide.. Together with its co-chaperonin GroES, plays an essential role in assisting protein folding. The GroEL-GroES system forms a nano-cage that allows encapsulation of the non-native substrate proteins and provides a physical environment optimized to promote and accelerate protein folding. The sequence is that of Chaperonin GroEL 4 from Rhizobium meliloti (strain 1021) (Ensifer meliloti).